A 315-amino-acid chain; its full sequence is ATP synthase gamma chain (315 aa).

Belongs to the ATPase gamma chain family. F-type ATPases have 2 components, CF(1) - the catalytic core - and CF(0) - the membrane proton channel. CF(1) has five subunits: alpha(3), beta(3), gamma(1), delta(1), epsilon(1). CF(0) has three main subunits: a, b and c.

The protein resides in the cellular thylakoid membrane. Functionally, produces ATP from ADP in the presence of a proton gradient across the membrane. The gamma chain is believed to be important in regulating ATPase activity and the flow of protons through the CF(0) complex. This Synechococcus sp. (strain PCC 6716) protein is ATP synthase gamma chain.